A 421-amino-acid polypeptide reads, in one-letter code: Putative leucine-rich repeat protein R380 (421 aa).

LRR repeat units lie at residues 48–69, 70–85, 89–110, 111–129, 130–150, 151–172, and 173–191; these read YLEK…QYLP, KIKE…THIP, NLIK…NQSK, LLYL…IFLP, ECRE…NYFP, NLRI…SSLI, and ELNI…PQLV.

This is Putative leucine-rich repeat protein R380 from Acanthamoeba polyphaga (Amoeba).